The sequence spans 228 residues: 30 kDa heat shock protein (228 aa).

Disordered regions lie at residues 34-53 (EVQGSAPETGSRRHTQPTRT), 117-136 (KGEPHSPAAHHATVEDDVDE), and 144-174 (TATGANNQNNQQVAQRASAPTTEEKPKAPAE). The 180-residue stretch at 49–228 (QPTRTFSPKF…KHETIRIAIN (180 aa)) folds into the sHSP domain. Low complexity predominate over residues 144-158 (TATGANNQNNQQVAQ).

Belongs to the small heat shock protein (HSP20) family.

The protein localises to the cytoplasm. This is 30 kDa heat shock protein (hsp30) from Neurospora crassa (strain ATCC 24698 / 74-OR23-1A / CBS 708.71 / DSM 1257 / FGSC 987).